Consider the following 1479-residue polypeptide: ABC transporter ecdL (1479 aa).

3 helical membrane passes run 32–52 (LLFE…SVAL), 82–102 (LSNA…WLSF), and 142–162 (IASI…VEAM). N-linked (GlcNAc...) asparagine glycans are attached at residues Asn-183 and Asn-234. 2 helical membrane-spanning segments follow: residues 251-271 (WGGF…PFLV) and 291-311 (SGLI…TAAF). Positions 258–535 (LCLIGVNYAQ…FVESLMGLRQ (278 aa)) constitute an ABC transmembrane type-1 1 domain. The N-linked (GlcNAc...) asparagine glycan is linked to Asn-345. The next 2 membrane-spanning stretches (helical) occupy residues 365-382 (LHET…LWLL) and 391-411 (VAAA…SGLL). A glycan (N-linked (GlcNAc...) asparagine) is linked at Asn-427. 2 helical membrane passes run 469-489 (LLVA…TFAF) and 503-523 (PLLA…GQAV). The region spanning 607 to 835 (IVLQNHTASW…GSSLRLEELV (229 aa)) is the ABC transporter 1 domain. N-linked (GlcNAc...) asparagine glycosylation is found at Asn-611 and Asn-628. An ATP-binding site is contributed by 641–648 (GPIGSGKS). N-linked (GlcNAc...) asparagine glycosylation is found at Asn-793 and Asn-797. 5 helical membrane-spanning segments follow: residues 885 to 905 (TIGW…VVAL), 955 to 975 (LFAV…LHLM), 1028 to 1048 (ALIG…VIVY), 1052 to 1072 (YLAA…MFYL), and 1135 to 1155 (IWLT…LVSI). Residues 932 to 1193 (IWLKFWTEAN…LVYNWTALEN (262 aa)) enclose the ABC transmembrane type-1 2 domain. Asn-1161 carries N-linked (GlcNAc...) asparagine glycosylation. Residues 1165–1185 (ASIGLALVNLIAFGANMKGLV) traverse the membrane as a helical segment. N-linked (GlcNAc...) asparagine glycosylation occurs at Asn-1187. In terms of domain architecture, ABC transporter 2 spans 1230–1461 (IKFKSVTASY…RSIFASLLRS (232 aa)). 1264 to 1271 (GRTGCGKS) lines the ATP pocket. Residues 1460 to 1479 (RSGDEEPGNGHKHESEGEEE) are disordered. The segment covering 1461–1479 (SGDEEPGNGHKHESEGEEE) has biased composition (basic and acidic residues).

It belongs to the ABC transporter superfamily. ABCC family. Conjugate transporter (TC 3.A.1.208) subfamily.

It is found in the cell membrane. Its function is as follows. ABC transporter; part of the gene cluster that mediates the biosynthesis of echinocandin B, a fungal lipidated cyclic hexapeptide that acts as an antifungal agent. This chain is ABC transporter ecdL, found in Aspergillus rugulosus (Emericella rugulosa).